Consider the following 294-residue polypeptide: NAD kinase (294 aa).

D74 serves as the catalytic Proton acceptor. NAD(+)-binding positions include 74–75 (DG), 148–149 (NE), H159, R176, D178, 189–194 (TAYSLS), and Q249.

The protein belongs to the NAD kinase family. Requires a divalent metal cation as cofactor.

It localises to the cytoplasm. It carries out the reaction NAD(+) + ATP = ADP + NADP(+) + H(+). Involved in the regulation of the intracellular balance of NAD and NADP, and is a key enzyme in the biosynthesis of NADP. Catalyzes specifically the phosphorylation on 2'-hydroxyl of the adenosine moiety of NAD to yield NADP. This chain is NAD kinase, found in Vibrio campbellii (strain ATCC BAA-1116).